The following is a 546-amino-acid chain: ATP synthase F(1) complex catalytic subunit beta, mitochondrial (546 aa).

The transit peptide at 1–45 directs the protein to the mitochondrion; the sequence is MLGFVGRVAATSASGALRGLGPSPLPQVKVLLRASPAALQSARDY. Residues Lys123, Lys132, and Lys160 each carry the N6-acetyllysine; alternate modification. Residues Lys123, Lys132, and Lys160 each carry the N6-succinyllysine; alternate modification. At Lys197 the chain carries N6-acetyllysine. Gly208, Val209, Gly210, Lys211, Thr212, and Val213 together coordinate ADP. Gly208 contacts ATP. Residues Gly208, Val209, Gly210, Lys211, and Thr212 each contribute to the phosphate site. Gly210, Lys211, Thr212, and Val213 together coordinate ATP. Mg(2+) is bound at residue Thr212. Glu237 contacts Mg(2+). Arg238 lines the ATP pocket. Residues Lys258 and Lys263 each carry the N6-acetyllysine; alternate modification. Residues Lys258 and Lys263 each carry the N6-succinyllysine; alternate modification. A Phosphothreonine modification is found at Thr311. The residue at position 425 (Lys425) is an N6-acetyllysine. Ser432 carries the post-translational modification Phosphoserine. Residues Lys479 and Lys484 each carry the N6-acetyllysine modification. At Lys521 the chain carries N6-acetyllysine; alternate. At Lys521 the chain carries N6-succinyllysine; alternate. Residues 521–546 are disordered; the sequence is KLAEEHSATQTSPSPKGAAAXXXRVV.

Belongs to the ATPase alpha/beta chains family. As to quaternary structure, homotrimer. Component of the ATP synthase complex composed at least of ATP5F1A/subunit alpha, ATP5F1B/subunit beta, ATP5MC1/subunit c (homooctomer), MT-ATP6/subunit a, MT-ATP8/subunit 8, ATP5ME/subunit e, ATP5MF/subunit f, ATP5MG/subunit g, ATP5MK/subunit k, ATP5MJ/subunit j, ATP5F1C/subunit gamma, ATP5F1D/subunit delta, ATP5F1E/subunit epsilon, ATP5PF/subunit F6, ATP5PB/subunit b, ATP5PD/subunit d, ATP5PO/subunit OSCP. ATP synthase complex consists of a soluble F(1) head domain (subunits alpha(3) and beta(3)) - the catalytic core - and a membrane F(0) domain - the membrane proton channel (subunits c, a, 8, e, f, g, k and j). These two domains are linked by a central stalk (subunits gamma, delta, and epsilon) rotating inside the F1 region and a stationary peripheral stalk (subunits F6, b, d, and OSCP). Interacts with PPIF. Interacts with BCL2L1 isoform BCL-X(L); the interaction mediates the association of BCL2L1 isoform BCL-X(L) with the mitochondrial membrane F(1)F(0) ATP synthase and enhances neurons metabolic efficiency. Interacts with CLN5 and PPT1. Interacts with S100A1; this interaction increases F1-ATPase activity. Interacts with MTLN. Interacts with TTC5/STRAP; the interaction results in decreased mitochondrial ATP production.

The protein resides in the mitochondrion inner membrane. It carries out the reaction ATP + H2O + 4 H(+)(in) = ADP + phosphate + 5 H(+)(out). Functionally, catalytic subunit beta, of the mitochondrial membrane ATP synthase complex (F(1)F(0) ATP synthase or Complex V) that produces ATP from ADP in the presence of a proton gradient across the membrane which is generated by electron transport complexes of the respiratory chain. ATP synthase complex consist of a soluble F(1) head domain - the catalytic core - and a membrane F(1) domain - the membrane proton channel. These two domains are linked by a central stalk rotating inside the F(1) region and a stationary peripheral stalk. During catalysis, ATP synthesis in the catalytic domain of F(1) is coupled via a rotary mechanism of the central stalk subunits to proton translocation. In vivo, can only synthesize ATP although its ATP hydrolase activity can be activated artificially in vitro. With the subunit alpha (ATP5F1A), forms the catalytic core in the F(1) domain. This Canis lupus familiaris (Dog) protein is ATP synthase F(1) complex catalytic subunit beta, mitochondrial.